Reading from the N-terminus, the 112-residue chain is Reprimo-like protein (112 aa).

Residues 59-79 (VVQIAVLCVLSLTVLFGIFFL) form a helical membrane-spanning segment.

This sequence belongs to the reprimo family.

It localises to the membrane. The sequence is that of Reprimo-like protein (rprml) from Xenopus laevis (African clawed frog).